We begin with the raw amino-acid sequence, 623 residues long: Phosphomethylpyrimidine synthase (623 aa).

Substrate-binding positions include Asn-221, Met-250, Tyr-279, His-315, 335-337 (SRG), 376-379 (DGLR), and Glu-415. His-419 provides a ligand contact to Zn(2+). Tyr-442 is a substrate binding site. Position 483 (His-483) interacts with Zn(2+). [4Fe-4S] cluster-binding residues include Cys-563, Cys-566, and Cys-571.

The protein belongs to the ThiC family. Homodimer. It depends on [4Fe-4S] cluster as a cofactor.

The catalysed reaction is 5-amino-1-(5-phospho-beta-D-ribosyl)imidazole + S-adenosyl-L-methionine = 4-amino-2-methyl-5-(phosphooxymethyl)pyrimidine + CO + 5'-deoxyadenosine + formate + L-methionine + 3 H(+). It functions in the pathway cofactor biosynthesis; thiamine diphosphate biosynthesis. Its function is as follows. Catalyzes the synthesis of the hydroxymethylpyrimidine phosphate (HMP-P) moiety of thiamine from aminoimidazole ribotide (AIR) in a radical S-adenosyl-L-methionine (SAM)-dependent reaction. This Parvibaculum lavamentivorans (strain DS-1 / DSM 13023 / NCIMB 13966) protein is Phosphomethylpyrimidine synthase.